The chain runs to 332 residues: MTTQLDRVVLIGVAGDSGCGKSTFLRRLTDLFGEEFMTVICLDDYHSLDRQGRKAAGVTALDPRANNFDLMYEQIKTLKSGQSIMKPIYNHETGLLDPPEKVEPNKVVVIEGLHPLYDERVRELVDFGVYLDISEEVKINWKIQRDMAERGHTYEDILASINARKPDFTAYIEPQKQYADVVIQVLPTRLIEDKESKLLRVRLVQKEGVKFFEPAYLFDEGSTIDWRPCGRKLTCTYPGIKMYYGPDNFMGNEVSLLEVDGRFENLEEMVYVENHLSKTGTKYYGEMTELLLKHKDYPGTDNGTGLFQVLVGLKMRKVYEQLTAEAKVPASV.

It belongs to the phosphoribulokinase family.

It catalyses the reaction D-ribulose 5-phosphate + ATP = D-ribulose 1,5-bisphosphate + ADP + H(+). Its pathway is carbohydrate biosynthesis; Calvin cycle. The protein is Phosphoribulokinase (prk) of Synechocystis sp. (strain ATCC 27184 / PCC 6803 / Kazusa).